Reading from the N-terminus, the 607-residue chain is UvrABC system protein C (607 aa).

The 79-residue stretch at 16-94 folds into the GIY-YIG domain; it reads GRPGVYRMFD…IKEWRPPYNI (79 aa). Positions 203–238 constitute a UVR domain; it reads QQLGNELNAEMEKAAMALNFEKAAELRDQIALLRRV.

This sequence belongs to the UvrC family. As to quaternary structure, interacts with UvrB in an incision complex.

It localises to the cytoplasm. Its function is as follows. The UvrABC repair system catalyzes the recognition and processing of DNA lesions. UvrC both incises the 5' and 3' sides of the lesion. The N-terminal half is responsible for the 3' incision and the C-terminal half is responsible for the 5' incision. The protein is UvrABC system protein C of Pseudomonas entomophila (strain L48).